The following is a 1482-amino-acid chain: Calcium-dependent protein kinase 6 (1482 aa).

Disordered stretches follow at residues 250–320 (TNNY…IRPN) and 739–760 (SENF…DDSN). The span at 254–264 (AHDNNQDSNSY) shows a compositional bias: polar residues. Residues 277–301 (EEDNDTGDTYADNEEDEDNRDDNDD) are compositionally biased toward acidic residues. The segment covering 302 to 318 (YSQYNQCEVESDTNQIR) has biased composition (polar residues). Residues 739 to 748 (SENFSNNFND) are compositionally biased toward low complexity. Residues 749–760 (NKQKSLKNDDSN) are compositionally biased toward basic and acidic residues. 2 consecutive EF-hand domains span residues 931–966 (IFER…LCYN) and 972–1007 (VDKK…LLKQ). Residues Asp-985, Ser-987, Asn-989, Cys-991, and Asp-996 each contribute to the Ca(2+) site. The 253-residue stretch at 1043 to 1295 (LSFKKILGCG…AAVLLHHPWF (253 aa)) folds into the Protein kinase domain. ATP is bound by residues 1049 to 1057 (LGCGAFGEV) and Lys-1072. The active-site Proton acceptor is the Asp-1162. EF-hand domains lie at 1338 to 1373 (NHVK…AGVK), 1376 to 1406 (DINR…RWKN), 1407 to 1442 (IDST…NGVN), and 1468 to 1482 (KISF…LSTF). Positions 1351, 1353, 1355, 1357, and 1362 each coordinate Ca(2+). Ca(2+) is bound by residues Asp-1420, Asp-1422, Asp-1424, Tyr-1426, and Asp-1431.

Belongs to the protein kinase superfamily. Ser/Thr protein kinase family. CDPK subfamily. The cofactor is Mg(2+).

It carries out the reaction L-seryl-[protein] + ATP = O-phospho-L-seryl-[protein] + ADP + H(+). The catalysed reaction is L-threonyl-[protein] + ATP = O-phospho-L-threonyl-[protein] + ADP + H(+). Activated by calcium. In terms of biological role, calcium-dependent protein kinase which acts as a sensor and effector of intracellular Ca(2+) levels. In sporozoites, probably involved in the secretion of the cysteine protease that cleaves circumsporozoite protein CSP, thereby exposing CSP TSR domain, which binds with high affinity to highly sulfated heparan sulfate proteoglycans (HSPGs), resulting in productive invasion of the host hepatocytes. This chain is Calcium-dependent protein kinase 6, found in Plasmodium berghei (strain Anka).